A 31-amino-acid polypeptide reads, in one-letter code: Photosystem II reaction center protein T (31 aa).

A helical membrane pass occupies residues 3–23 (AFTYTLLMTLGVVTLFFAVAF).

This sequence belongs to the PsbT family. In terms of assembly, PSII is composed of 1 copy each of membrane proteins PsbA, PsbB, PsbC, PsbD, PsbE, PsbF, PsbH, PsbI, PsbJ, PsbK, PsbL, PsbM, PsbT, PsbX, PsbY, Psb30/Ycf12, peripheral proteins PsbO, CyanoQ (PsbQ), PsbU, PsbV and a large number of cofactors. It forms dimeric complexes.

It localises to the cellular thylakoid membrane. Its function is as follows. Found at the monomer-monomer interface of the photosystem II (PS II) dimer, plays a role in assembly and dimerization of PSII. PSII is a light-driven water plastoquinone oxidoreductase, using light energy to abstract electrons from H(2)O, generating a proton gradient subsequently used for ATP formation. This is Photosystem II reaction center protein T from Prochlorococcus marinus (strain SARG / CCMP1375 / SS120).